Reading from the N-terminus, the 156-residue chain is Small ribosomal subunit protein uS7 (156 aa).

Belongs to the universal ribosomal protein uS7 family. Part of the 30S ribosomal subunit. Contacts proteins S9 and S11.

In terms of biological role, one of the primary rRNA binding proteins, it binds directly to 16S rRNA where it nucleates assembly of the head domain of the 30S subunit. Is located at the subunit interface close to the decoding center, probably blocks exit of the E-site tRNA. The protein is Small ribosomal subunit protein uS7 of Rhodopseudomonas palustris (strain BisB5).